A 45-amino-acid polypeptide reads, in one-letter code: Large ribosomal subunit protein bL34 (45 aa).

Belongs to the bacterial ribosomal protein bL34 family.

The polypeptide is Large ribosomal subunit protein bL34 (Kocuria rhizophila (strain ATCC 9341 / DSM 348 / NBRC 103217 / DC2201)).